A 463-amino-acid chain; its full sequence is Sodium-coupled neutral amino acid transporter 7 (463 aa).

Serine 28 carries the phosphoserine modification. 11 helical membrane passes run 56–76 (AIFIVVNACLGAGLLNFPAAF), 82–102 (VAAGITLQMAMLVFIISGLVI), 130–150 (LCEVAIATYTFGTCIAFLIII), 179–199 (FTISLTAFLFILPLSIPREIG), 206–226 (FLSVVGTWYVTAIIIIKYIWP), 240–260 (ASWIAVFNAMPTICFGFQCHV), 283–303 (AAMVIALAVYMGTGICGFLTF), 320–340 (MAVAVARAFIILSVLTSYPIL), 372–392 (VLQTLVWFLLTLLLALFIPDI), 396–416 (ISVIGGLAACFIFVFPGLCLI), and 429–449 (ASWWAMVSYGVLLVTLGAFIF).

Belongs to the amino acid/polyamine transporter 2 family. In terms of assembly, interacts with the mTORC1 complex; this interaction mediates the recruitment of mTORC1 to the lysosome and its subsequent activation.

It localises to the lysosome membrane. Its subcellular location is the cell projection. The protein resides in the axon. It catalyses the reaction L-asparagine(in) + Na(+)(in) = L-asparagine(out) + Na(+)(out). The enzyme catalyses L-glutamine(in) + Na(+)(in) = L-glutamine(out) + Na(+)(out). Symporter that selectively cotransports sodium ions and amino acids, such as L-glutamine and L-asparagine from the lysosome into the cytoplasm and may participates in mTORC1 activation. The transport activity requires an acidic lysosomal lumen. The protein is Sodium-coupled neutral amino acid transporter 7 of Bos taurus (Bovine).